The primary structure comprises 208 residues: Small ribosomal subunit protein uS4 (208 aa).

The 63-residue stretch at 98–160 folds into the S4 RNA-binding domain; the sequence is QRLDNVVYRM…SKNNSQIVRA (63 aa).

This sequence belongs to the universal ribosomal protein uS4 family. Part of the 30S ribosomal subunit. Contacts protein S5. The interaction surface between S4 and S5 is involved in control of translational fidelity.

In terms of biological role, one of the primary rRNA binding proteins, it binds directly to 16S rRNA where it nucleates assembly of the body of the 30S subunit. Functionally, with S5 and S12 plays an important role in translational accuracy. The chain is Small ribosomal subunit protein uS4 from Sulfurimonas denitrificans (strain ATCC 33889 / DSM 1251) (Thiomicrospira denitrificans (strain ATCC 33889 / DSM 1251)).